Reading from the N-terminus, the 226-residue chain is MKRLAVSILCLALAGCAIEKAEVRTPSFDEQLPAPQPSYASGSIWQAASAGIAEDHKARRKGDIITVVIVENASASKQATTDTDRKASISASIPYLMGLEKQKLILGKLTGADLGNLLGASTDSTFGGSGATTRKENLVATMSAKIIDVLPNGNFLIEGRRNVKVNNEDQIIILQGTVRPRDVSPDNTVNSSLIADARITYTGEGVISDRQRPGWLMNFLDYIWPF.

Residues 1 to 15 (MKRLAVSILCLALAG) form the signal peptide. The N-palmitoyl cysteine moiety is linked to residue cysteine 16. The S-diacylglycerol cysteine moiety is linked to residue cysteine 16.

Belongs to the FlgH family. The basal body constitutes a major portion of the flagellar organelle and consists of four rings (L,P,S, and M) mounted on a central rod.

It is found in the cell outer membrane. It localises to the bacterial flagellum basal body. Functionally, assembles around the rod to form the L-ring and probably protects the motor/basal body from shearing forces during rotation. The protein is Flagellar L-ring protein of Geobacter metallireducens (strain ATCC 53774 / DSM 7210 / GS-15).